The sequence spans 451 residues: Trigger factor (451 aa).

The region spanning 165–250 (DDKLTIDFEG…LHQIQAREML (86 aa)) is the PPIase FKBP-type domain.

It belongs to the FKBP-type PPIase family. Tig subfamily.

It is found in the cytoplasm. It catalyses the reaction [protein]-peptidylproline (omega=180) = [protein]-peptidylproline (omega=0). Functionally, involved in protein export. Acts as a chaperone by maintaining the newly synthesized protein in an open conformation. Functions as a peptidyl-prolyl cis-trans isomerase. The protein is Trigger factor (tig) of Helicobacter pylori (strain ATCC 700392 / 26695) (Campylobacter pylori).